The following is a 243-amino-acid chain: 1-(5-phosphoribosyl)-5-[(5-phosphoribosylamino)methylideneamino] imidazole-4-carboxamide isomerase (243 aa).

The active-site Proton acceptor is Asp8. Residue Asp129 is the Proton donor of the active site.

It belongs to the HisA/HisF family.

It localises to the cytoplasm. The catalysed reaction is 1-(5-phospho-beta-D-ribosyl)-5-[(5-phospho-beta-D-ribosylamino)methylideneamino]imidazole-4-carboxamide = 5-[(5-phospho-1-deoxy-D-ribulos-1-ylimino)methylamino]-1-(5-phospho-beta-D-ribosyl)imidazole-4-carboxamide. The protein operates within amino-acid biosynthesis; L-histidine biosynthesis; L-histidine from 5-phospho-alpha-D-ribose 1-diphosphate: step 4/9. In Brucella abortus (strain 2308), this protein is 1-(5-phosphoribosyl)-5-[(5-phosphoribosylamino)methylideneamino] imidazole-4-carboxamide isomerase.